Here is a 751-residue protein sequence, read N- to C-terminus: Protein CLMP1 (751 aa).

Residues 1-11 show a composition bias toward basic residues; it reads MGKSGGRKKKS. Residues 1–33 form a disordered region; that stretch reads MGKSGGRKKKSGGSNSNSSQVNSSETSGLSKPS. Residues 12–28 are compositionally biased toward low complexity; that stretch reads GGSNSNSSQVNSSETSG. 3 TPR repeats span residues 51–84, 89–124, and 125–158; these read AHELKEEGNKKFQARDYVGALEQYENGIKLIPKS, AVFHSNRAACLMQMKPIDYESVISECSMALKSQPGF, and TRALLRRARAFEAVGKFDLAVQDVNVLLGSDPNH. The PB1 domain occupies 290-382; it reads WRPLKFVYDH…GMLRLHVVDV (93 aa). The disordered stretch occupies residues 386–443; it reads QEPMLLEEEEEEVEEKPVIEEVISSPTESLSETEINTEKTDKEVEKEKASSSEDPETK. Positions 390 to 399 are enriched in acidic residues; that stretch reads LLEEEEEEVE. Positions 409 to 419 are enriched in polar residues; it reads SSPTESLSETE. A compositionally biased stretch (basic and acidic residues) spans 421 to 443; that stretch reads NTEKTDKEVEKEKASSSEDPETK. TPR repeat units lie at residues 434 to 468, 481 to 514, and 536 to 570; these read ASSSEDPETKELEMDDWLFDFAHLFRTHVGIDPDA, SEALEETVTSEKAQPLFDKASAKFQEVAALAFFN, and EVVAAQLQTAYEWVKERYTLAKEKYEQALSIKPDF. Residues 630-648 show a composition bias toward basic and acidic residues; the sequence is EQRMDDLKNPNSNKKEEVS. A disordered region spans residues 630–663; the sequence is EQRMDDLKNPNSNKKEEVSKRRKKQGGDGNEEVS.

In terms of assembly, interacts with myosin XI-K. In terms of tissue distribution, expressed in roots, stems, leaves, apex, flowers and seeds. Detected throughout the petiole in juvenile and young leaves, but restricted to the petiole midvein in older leaves. Expressed in hydathodes, at the base of the trichome, in the vascular cylinder of primary root and lateral root, in emerging lateral root primordia, in pollen and in developing embryos, but not in mature embryos.

It localises to the cytoplasm. In terms of biological role, required for plastid separation and partitioning during cell division. Not involved in plastid constriction or in the organization of cytoplasmic actin cables. Contributes to polar growth of root hairs. The polypeptide is Protein CLMP1 (Arabidopsis thaliana (Mouse-ear cress)).